Consider the following 257-residue polypeptide: MTAAPRNPLIVIPARLAASRLPDKPLADIHGRPMIAHVLDRAREADIGPVVVACADAAIADAVAAAGGRAVLTDPAHPSGSDRVWEAVCRVDPDGRHDAVVNVQGDLPTIDPAAVRAVFGPLARPGTDIATLAAEIVRVEERTDPNVVKAVVELAPGARDGRALYFTRATAPWGEGPLFHHIGLYAYRREALARFVALPPAALERREKLEQLRALAAGMTIAVAIVDTVPLGVDTAADLERARALLDPRTGARPALP.

Belongs to the KdsB family.

The protein resides in the cytoplasm. The catalysed reaction is 3-deoxy-alpha-D-manno-oct-2-ulosonate + CTP = CMP-3-deoxy-beta-D-manno-octulosonate + diphosphate. It functions in the pathway nucleotide-sugar biosynthesis; CMP-3-deoxy-D-manno-octulosonate biosynthesis; CMP-3-deoxy-D-manno-octulosonate from 3-deoxy-D-manno-octulosonate and CTP: step 1/1. Its pathway is bacterial outer membrane biogenesis; lipopolysaccharide biosynthesis. In terms of biological role, activates KDO (a required 8-carbon sugar) for incorporation into bacterial lipopolysaccharide in Gram-negative bacteria. In Rhodospirillum centenum (strain ATCC 51521 / SW), this protein is 3-deoxy-manno-octulosonate cytidylyltransferase.